Consider the following 978-residue polypeptide: Chaperone protein ClpB2, chloroplastic (978 aa).

A chloroplast-targeting transit peptide spans 1-76 (MAAAPPLAAG…RMPPRTLSVR (76 aa)). The 145-residue stretch at 85 to 229 (TQQEFTEMAW…KTAIESIRGK (145 aa)) folds into the Clp R domain. 2 repeat regions span residues 89 to 154 (FTEM…IQRQ) and 166 to 229 (LGRD…IRGK). An i region spans residues 244 to 492 (LDKYGKDLTA…KLKMEITSKP (249 aa)). ATP contacts are provided by residues 289–296 (GEPGVGKT) and 692–699 (GPTGVGKT). Residues 618-809 (VTQDDIAEIV…IIIMTSNVGS (192 aa)) form an II region.

Belongs to the ClpA/ClpB family.

The protein localises to the plastid. Its subcellular location is the chloroplast. Functionally, molecular chaperone that may play a role in chloroplast development. This chain is Chaperone protein ClpB2, chloroplastic (CLPB2), found in Oryza sativa subsp. japonica (Rice).